Reading from the N-terminus, the 171-residue chain is Co-chaperone protein HscB (171 aa).

In terms of domain architecture, J spans 2 to 74 (DYFTLFGLPA…LTRAEYLLSL (73 aa)).

The protein belongs to the HscB family. In terms of assembly, interacts with HscA and stimulates its ATPase activity. Interacts with IscU.

Functionally, co-chaperone involved in the maturation of iron-sulfur cluster-containing proteins. Seems to help targeting proteins to be folded toward HscA. This Salmonella agona (strain SL483) protein is Co-chaperone protein HscB.